Reading from the N-terminus, the 389-residue chain is MKKISVLGSTGSIGKKTVDLLLKRKEEYQVEALSTCSNFALLACQAKLLNARYVAISNKRFYKDLKESLLGTGIKVEVGTEGLMNVASLPVDLSVVAVVGIAGLEPVMHVIESGTKVIALANKESIVCGGKLLLKKTEEKNVQIVPIDSEHNAIFQVLQNGNKCVEKIILTASGGSFLNYSLEQLRNVTVGQALSHPTWNMGKKISVDSATMMNKALEIIEAHNLFNISPNRIEAIVHPESIIHGIVIYKDGFNFAVLAEADMAIPISYALSWPERSALSYKLDLTKQKLTFQEPDHKRFPALKLSMEVLNSSSPHTNSIVLNAANEVAVDKFLKSRIDFLEIIKVVKLTVENFDSYTDINSLSDIINIDLESRAIAKEIIKNKVLAYS.

Threonine 10, glycine 11, serine 12, isoleucine 13, asparagine 38, and asparagine 122 together coordinate NADPH. Residue lysine 123 coordinates 1-deoxy-D-xylulose 5-phosphate. An NADPH-binding site is contributed by glutamate 124. Aspartate 148 is a binding site for Mn(2+). The 1-deoxy-D-xylulose 5-phosphate site is built by serine 149, glutamate 150, serine 173, and histidine 196. Residue glutamate 150 coordinates Mn(2+). An NADPH-binding site is contributed by glycine 202. 1-deoxy-D-xylulose 5-phosphate is bound by residues serine 209, asparagine 214, lysine 215, and glutamate 218. Glutamate 218 is a Mn(2+) binding site.

Belongs to the DXR family. Requires Mg(2+) as cofactor. It depends on Mn(2+) as a cofactor.

The catalysed reaction is 2-C-methyl-D-erythritol 4-phosphate + NADP(+) = 1-deoxy-D-xylulose 5-phosphate + NADPH + H(+). Its pathway is isoprenoid biosynthesis; isopentenyl diphosphate biosynthesis via DXP pathway; isopentenyl diphosphate from 1-deoxy-D-xylulose 5-phosphate: step 1/6. Its function is as follows. Catalyzes the NADPH-dependent rearrangement and reduction of 1-deoxy-D-xylulose-5-phosphate (DXP) to 2-C-methyl-D-erythritol 4-phosphate (MEP). This is 1-deoxy-D-xylulose 5-phosphate reductoisomerase from Wolbachia sp. subsp. Brugia malayi (strain TRS).